The sequence spans 166 residues: Small ribosomal subunit protein uS5 (166 aa).

An S5 DRBM domain is found at 11–74 (LIDKVVHISR…ESAKRTMFEV (64 aa)).

The protein belongs to the universal ribosomal protein uS5 family. In terms of assembly, part of the 30S ribosomal subunit. Contacts proteins S4 and S8.

Its function is as follows. With S4 and S12 plays an important role in translational accuracy. Functionally, located at the back of the 30S subunit body where it stabilizes the conformation of the head with respect to the body. This Syntrophobacter fumaroxidans (strain DSM 10017 / MPOB) protein is Small ribosomal subunit protein uS5.